A 586-amino-acid chain; its full sequence is 25S rRNA (adenine-N(1))-methyltransferase (586 aa).

Disordered regions lie at residues 23 to 229 (GTAP…LTPL) and 536 to 573 (GKCV…EVKD). Positions 25–41 (APAAPAPASAPAVSSSK) are enriched in low complexity. The segment covering 65 to 83 (LWEKVIEQKKEGVADGVKK) has biased composition (basic and acidic residues). Positions 99 to 108 (KLSNSNNDGN) are enriched in polar residues. Over residues 114-123 (NNKKKNKNKN) the composition is skewed to basic residues. The segment covering 144–163 (GEEDEDDNNDDADEWEGIDE) has biased composition (acidic residues). The segment covering 164–182 (DEKHASSEKPTPKKDDKKQ) has biased composition (basic and acidic residues). The segment covering 183-192 (QQLQQQQQQK) has biased composition (low complexity). Residues 204–213 (NGTTSNWQQD) are compositionally biased toward polar residues. Residues 217-229 (PKTATPAPKLTPL) are compositionally biased toward low complexity. The span at 539 to 549 (VPKDGQEDTTK) shows a compositional bias: basic and acidic residues. Residues 550–559 (NKKGGQKPKP) are compositionally biased toward basic residues.

Belongs to the methyltransferase superfamily. RRP8 family.

The protein localises to the nucleus. It is found in the nucleolus. Functionally, S-adenosyl-L-methionine-dependent methyltransferase that specifically methylates the N(1) position of a conserved adenine in helix 25.1 in 25S rRNA. Required both for ribosomal 40S and 60S subunits biogenesis. Required for efficient pre-rRNA cleavage at site A2. The polypeptide is 25S rRNA (adenine-N(1))-methyltransferase (RPR8) (Chaetomium thermophilum (strain DSM 1495 / CBS 144.50 / IMI 039719) (Thermochaetoides thermophila)).